We begin with the raw amino-acid sequence, 245 residues long: Tegument protein UL51 homolog (245 aa).

Residue Cys-10 is the site of S-palmitoyl cysteine; by host attachment. Positions 225-245 are disordered; sequence PVKSNLKSKHKPKRKASLVAV. Positions 230-245 are enriched in basic residues; the sequence is LKSKHKPKRKASLVAV.

Belongs to the herpesviridae UL51 family. As to quaternary structure, oligomerizes. Interacts with ORF55; this interaction mediates ORF55 incorporation to virions. Post-translationally, phosphorylated. In terms of processing, palmitoylation is necessary for Golgi localization.

It is found in the virion tegument. The protein localises to the host cytoplasm. The protein resides in the host Golgi apparatus. In terms of biological role, plays several roles during the time course of infection, including egress of virus particles from the perinuclear space and secondary envelopment of cytoplasmic capsids that bud into specific trans-Golgi network (TGN)-derived membranes. This Equine herpesvirus 1 (strain Ab4p) (EHV-1) protein is Tegument protein UL51 homolog.